A 263-amino-acid polypeptide reads, in one-letter code: MAPK-interacting and spindle-stabilizing protein (263 aa).

A disordered region spans residues 13–238; the sequence is GSPAPFLPSG…LGKQQGHNTT (226 aa). 2 stretches are compositionally biased toward pro residues: residues 14 to 34 and 140 to 155; these read SPAP…PYPG and GLQP…PPGP. Positions 156-165 are enriched in low complexity; the sequence is SAASPGPGSL. The span at 176–189 shows a compositional bias: polar residues; that stretch reads PSDSSNPESTLEST. The span at 202–213 shows a compositional bias: basic residues; the sequence is IKRRRSKKKSKR.

This sequence belongs to the MISS family. As to quaternary structure, interacts with MAPK1. In terms of processing, phosphorylated in vitro by MAPK1.

It localises to the cytoplasm. The protein resides in the cytoskeleton. Its subcellular location is the spindle. Its function is as follows. Involved in the maintenance of the spindle integrity during the cytostatic factor (CSF) arrest of oocytes. This Mus musculus (Mouse) protein is MAPK-interacting and spindle-stabilizing protein (Mapk1ip1).